We begin with the raw amino-acid sequence, 488 residues long: MKKLTALFNLPELKNDIELHNMVLDSRKVKAGDLFVAIKGHQVDGNQFIDSALHSGASAVVSETELSSEHLTVAFIGNVPVVKYHQLARHLSSLADVFYDSPSKNLTLVGVTGTNGKTTISQLLAQWAELLGLRAAVMGTIGNGLFGQIVEAKNTTGSAVEIQSSLSTFKHAGADFTSIEVSSHGLAQHRVEALHFKAAIFTNLTRDHLDYHQSMENYAAAKKRLFTELDTQIKVINADDEIGYQWLTKLPDAIAVSMNADFKVGSHQWMKAINIHYHFKGADITFESSWGNGVLHSPLIGAFNVSNLLLVMTTLLSFGYPLENLLATAKSLKGVCGRMEMIQYPNKPTVIVDYAHTPDALEKALIAAREHCQGELWCIFGCGGDRDRGKRPLMAQVAEQFAEKIIVTKDNPRTEPQSQIEADIVAGFKNMEKVGIIPDRAQAIQFAIESAVENDVILIAGKGHEHYQIIGSEVVHFSDQEIALDFLK.

UDP-N-acetyl-alpha-D-muramoyl-L-alanyl-D-glutamate is bound by residues L24, S26, and 41–43; that span reads HQV. Position 113 to 119 (113 to 119) interacts with ATP; it reads GTNGKTT. Residues N154, 155–156, S182, Q188, and R190 contribute to the UDP-N-acetyl-alpha-D-muramoyl-L-alanyl-D-glutamate site; that span reads TT. Residue K222 is modified to N6-carboxylysine. Residues R386, 410–413, G461, and E465 contribute to the meso-2,6-diaminopimelate site; that span reads DNPR. Positions 410–413 match the Meso-diaminopimelate recognition motif motif; it reads DNPR.

Belongs to the MurCDEF family. MurE subfamily. Requires Mg(2+) as cofactor. In terms of processing, carboxylation is probably crucial for Mg(2+) binding and, consequently, for the gamma-phosphate positioning of ATP.

Its subcellular location is the cytoplasm. The catalysed reaction is UDP-N-acetyl-alpha-D-muramoyl-L-alanyl-D-glutamate + meso-2,6-diaminopimelate + ATP = UDP-N-acetyl-alpha-D-muramoyl-L-alanyl-gamma-D-glutamyl-meso-2,6-diaminopimelate + ADP + phosphate + H(+). It functions in the pathway cell wall biogenesis; peptidoglycan biosynthesis. In terms of biological role, catalyzes the addition of meso-diaminopimelic acid to the nucleotide precursor UDP-N-acetylmuramoyl-L-alanyl-D-glutamate (UMAG) in the biosynthesis of bacterial cell-wall peptidoglycan. The protein is UDP-N-acetylmuramoyl-L-alanyl-D-glutamate--2,6-diaminopimelate ligase of Haemophilus influenzae (strain PittEE).